Reading from the N-terminus, the 900-residue chain is MVNSGHRRQRIINCVAQLPYKIQLGETNDEWNIVPATGSSSLYSSIEYLNSEEKAKDYEQHVLGWTGEIGRESLPSRLFNSKNRDKSENGEKGENDLHAKEEREKEEDPLYLTNDQIDGITKDLRRHGKSDDHYNVDNVHPVWLLRRDQKRWRGFAENVLWPTFHYILKFSSDSGEKENLSWYDYVRFNEAYAMKIGEIYEKGDIIWIHDYYLLLLPQLLRMKFNDQDLTIAYFHHSPWPSNEYFRVLPRRKQILDGLMGADRGWFQNEGFARHFVSSCKRLLDSTSRKSKNRLGMEQYQISAYGGDIVVDSLPIGINRVKLLEDTFTKDIAQKVLAIKDAFQGKKIIVGRDRLDSVRGVVQKLRAFETFLSMYPEWRDQVVLIQVSVPSMKGGTNQLIRLEQQVNELVTSINMQYGSLNFSPVHHYYMRIPKDVYLSLLRVADLCVIASVRDGTNTTALEYVTVKSHMSNYNCYGNPLILSEFSGTSTILKDAMIINPWDSVAVAKSINRALSLSRDEKRALEDKIWPQVPTIQKWTDQFLSTLSDIVDEAHNTTDRKMTPALNRPALLEHYRQSKRRLFLFDYDGTLTPIVQDPAAAIPSARLISILQKLASDPCNQIWIISGRDQAFLNKWLGSRLPQLGLSAEHGCFYKDVDEENWINLTEKFDMSWQEKVGSIMEEFTRRTPGSFIERKKVALTWHYRRADPELGEFYASELKKELDKICADYDLDVMEGKANIEVRPKFVNKGEIVKRLVWHHHGRRQDMLNTKKEELPISEMPDFTLCLGDDFTDEDMFNQLNDIEAVWKKQYEDEVNQWGGFGLYPCTVGSASKKTVAKAHLTDPQQVLDTLGLLVGDVSLFQSAGTVELDSRGHVKHSDSSIRSEQASARYAMKRQQSYKN.

Disordered regions lie at residues 76-109 (SRLF…EEDP) and 874-900 (VKHS…SYKN). The span at 82–108 (KNRDKSENGEKGENDLHAKEEREKEED) shows a compositional bias: basic and acidic residues.

The protein in the C-terminal section; belongs to the trehalose phosphatase family. This sequence in the N-terminal section; belongs to the glycosyltransferase 20 family. Mg(2+) is required as a cofactor.

It carries out the reaction alpha,alpha-trehalose 6-phosphate + H2O = alpha,alpha-trehalose + phosphate. The protein operates within carbohydrate biosynthesis. Its function is as follows. Phosphatase catalytic subunit of the trehalose synthase complex that catalyzes the production of trehalose from glucose-6-phosphate and UDP-alpha-D-glucose in a two step process. The chain is Trehalose-phosphatase from Zygosaccharomyces rouxii.